Reading from the N-terminus, the 445-residue chain is Argininosuccinate synthase (445 aa).

ATP is bound by residues 17 to 25 and Ala43; that span reads AFSGGLDTS. Tyr99 contributes to the L-citrulline binding site. Residues Gly129 and Thr131 each coordinate ATP. 3 residues coordinate L-aspartate: Thr131, Asn135, and Asp136. Asn135 contributes to the L-citrulline binding site. Asp136 contacts ATP. Positions 139 and 192 each coordinate L-citrulline. Asp194 is a binding site for ATP. Residues Thr201, Glu203, and Glu280 each coordinate L-citrulline.

It belongs to the argininosuccinate synthase family. Type 2 subfamily. As to quaternary structure, homotetramer.

It localises to the cytoplasm. It catalyses the reaction L-citrulline + L-aspartate + ATP = 2-(N(omega)-L-arginino)succinate + AMP + diphosphate + H(+). The protein operates within amino-acid biosynthesis; L-arginine biosynthesis; L-arginine from L-ornithine and carbamoyl phosphate: step 2/3. This Burkholderia cenocepacia (strain ATCC BAA-245 / DSM 16553 / LMG 16656 / NCTC 13227 / J2315 / CF5610) (Burkholderia cepacia (strain J2315)) protein is Argininosuccinate synthase.